The following is a 761-amino-acid chain: Wall-associated receptor kinase-like 4 (761 aa).

The N-terminal stretch at 1–26 is a signal peptide; it reads MKKETQNLQCIPLVISVLSLFGVSSA. At 27 to 349 the chain is on the extracellular side; that stretch reads RKPPYLCNRV…EPKKPGQIKP (323 aa). 5 N-linked (GlcNAc...) asparagine glycosylation sites follow: Asn64, Asn166, Asn206, Asn226, and Asn262. An atypical EGF-like region spans residues 278-339; sequence CVCSYGYFSG…CVNKPGWFTC (62 aa). Cystine bridges form between Cys280-Cys293, Cys316-Cys330, and Cys325-Cys339. A helical transmembrane segment spans residues 350-370; it reads VFQGVLIGSALLLFAFGIFGL. Residues 371–761 are Cytoplasmic-facing; the sequence is YKFIKKQRRS…VEPLVPLRTW (391 aa). A Protein kinase domain is found at 424 to 697; the sequence is FNTNRVLGQG…REVSVELERI (274 aa). Residues 430-438 and Lys452 each bind ATP; that span reads LGQGGQGTV. Tyr497 carries the phosphotyrosine modification. Residue Asp549 is the Proton acceptor of the active site. Thr583 and Thr588 each carry phosphothreonine. Residue Tyr596 is modified to Phosphotyrosine. The tract at residues 701–761 is disordered; it reads SYKSEIHNDD…VEPLVPLRTW (61 aa). A compositionally biased stretch (acidic residues) spans 708–732; it reads NDDDDDDDDDDEDDQAMELNIEETW.

This sequence belongs to the protein kinase superfamily. Ser/Thr protein kinase family. Expressed in the whole plant. Detected in root-shoot junctions and lateral root initiation sites.

It localises to the membrane. The enzyme catalyses L-seryl-[protein] + ATP = O-phospho-L-seryl-[protein] + ADP + H(+). It catalyses the reaction L-threonyl-[protein] + ATP = O-phospho-L-threonyl-[protein] + ADP + H(+). Functionally, serine/threonine-protein kinase that may function as a signaling receptor of extracellular matrix component. Plays a role in plant mineral nutrients response. This chain is Wall-associated receptor kinase-like 4 (WAKL4), found in Arabidopsis thaliana (Mouse-ear cress).